The chain runs to 509 residues: Bifunctional purine biosynthesis protein PurH (509 aa).

The MGS-like domain maps to 1–144; that stretch reads MKRALLSVSD…KNARDVIVVV (144 aa).

It belongs to the PurH family.

The catalysed reaction is (6R)-10-formyltetrahydrofolate + 5-amino-1-(5-phospho-beta-D-ribosyl)imidazole-4-carboxamide = 5-formamido-1-(5-phospho-D-ribosyl)imidazole-4-carboxamide + (6S)-5,6,7,8-tetrahydrofolate. It catalyses the reaction IMP + H2O = 5-formamido-1-(5-phospho-D-ribosyl)imidazole-4-carboxamide. Its pathway is purine metabolism; IMP biosynthesis via de novo pathway; 5-formamido-1-(5-phospho-D-ribosyl)imidazole-4-carboxamide from 5-amino-1-(5-phospho-D-ribosyl)imidazole-4-carboxamide (10-formyl THF route): step 1/1. It participates in purine metabolism; IMP biosynthesis via de novo pathway; IMP from 5-formamido-1-(5-phospho-D-ribosyl)imidazole-4-carboxamide: step 1/1. This chain is Bifunctional purine biosynthesis protein PurH, found in Oenococcus oeni (strain ATCC BAA-331 / PSU-1).